Reading from the N-terminus, the 247-residue chain is Carboxy-S-adenosyl-L-methionine synthase (247 aa).

Residues tyrosine 40, 65–67 (GAS), 90–91 (DN), 122–123 (DI), asparagine 137, and arginine 204 contribute to the S-adenosyl-L-methionine site.

It belongs to the class I-like SAM-binding methyltransferase superfamily. Cx-SAM synthase family. Homodimer.

It carries out the reaction prephenate + S-adenosyl-L-methionine = carboxy-S-adenosyl-L-methionine + 3-phenylpyruvate + H2O. In terms of biological role, catalyzes the conversion of S-adenosyl-L-methionine (SAM) to carboxy-S-adenosyl-L-methionine (Cx-SAM). The protein is Carboxy-S-adenosyl-L-methionine synthase of Pseudomonas fluorescens (strain Pf0-1).